The chain runs to 295 residues: MRRLTDSFILGLAKGAVIPGLYTFRMTEGRSPLGQIGVLITVAISFLLTFKRFDPRFYKPIGDFKIVFLSLMAPKLPSLLSAVVMICLIFSEMRLRMILSRCVMIMPSYSPAVFTGIMVSLFFKSQMFDDYSVLITAASLLPITVRYGWMIRSSGFLLGLQKYRPILKSTSFREVDLKCLVKFTVEFLLLFTILWIGKMFLSMPKSNHLFFLTVVNNVFFKLNVFKAAACAVVAILSGLMMNVCLYRIIFEAFVGLGFSSIMLNLSSDLKDRSFYAGDLLNGFFCLVVCCMYFGV.

8 helical membrane passes run 31–51, 66–86, 103–123, 131–151, 183–203, 218–238, 243–263, and 274–294; these read SPLGQIGVLITVAISFLLTFK, IVFLSLMAPKLPSLLSAVVMI, VMIMPSYSPAVFTGIMVSLFF, YSVLITAASLLPITVRYGWMI, FTVEFLLLFTILWIGKMFLSM, VFFKLNVFKAAACAVVAILSG, VCLYRIIFEAFVGLGFSSIML, and FYAGDLLNGFFCLVVCCMYFG.

The protein localises to the membrane. This chain is Protein U26 (U26), found in Homo sapiens (Human).